Reading from the N-terminus, the 180-residue chain is Bifunctional protein PyrR (180 aa).

The PRPP-binding motif lies at 101 to 113; it reads VVLVDDVIFKGRT.

It belongs to the purine/pyrimidine phosphoribosyltransferase family. PyrR subfamily.

It catalyses the reaction UMP + diphosphate = 5-phospho-alpha-D-ribose 1-diphosphate + uracil. In terms of biological role, regulates the transcription of the pyrimidine nucleotide (pyr) operon in response to exogenous pyrimidines. Functionally, also displays a weak uracil phosphoribosyltransferase activity which is not physiologically significant. In Trichormus variabilis (strain ATCC 29413 / PCC 7937) (Anabaena variabilis), this protein is Bifunctional protein PyrR.